An 80-amino-acid chain; its full sequence is Exodeoxyribonuclease 7 small subunit (80 aa).

It belongs to the XseB family. Heterooligomer composed of large and small subunits.

Its subcellular location is the cytoplasm. The catalysed reaction is Exonucleolytic cleavage in either 5'- to 3'- or 3'- to 5'-direction to yield nucleoside 5'-phosphates.. Functionally, bidirectionally degrades single-stranded DNA into large acid-insoluble oligonucleotides, which are then degraded further into small acid-soluble oligonucleotides. This is Exodeoxyribonuclease 7 small subunit from Salmonella paratyphi B (strain ATCC BAA-1250 / SPB7).